Consider the following 256-residue polypeptide: Small ribosomal subunit protein uS3 (256 aa).

In terms of domain architecture, KH type-2 spans 39 to 121; the sequence is IRTYLTKQLS…TIRINVVEVT (83 aa). The disordered stretch occupies residues 227-256; that stretch reads RHEQKFPLQQPKRRQQRRRPTFEDRSAQEA. The segment covering 246–256 has biased composition (basic and acidic residues); sequence PTFEDRSAQEA.

The protein belongs to the universal ribosomal protein uS3 family. In terms of assembly, part of the 30S ribosomal subunit. Forms a tight complex with proteins S10 and S14.

In terms of biological role, binds the lower part of the 30S subunit head. Binds mRNA in the 70S ribosome, positioning it for translation. The polypeptide is Small ribosomal subunit protein uS3 (Synechococcus sp. (strain JA-2-3B'a(2-13)) (Cyanobacteria bacterium Yellowstone B-Prime)).